The sequence spans 203 residues: Secreted phosphoprotein 24 (203 aa).

The first 23 residues, 1–23 (MEKMAMKMLVIFVLGMNHWTCTG), serve as a signal peptide directing secretion. Intrachain disulfides connect Cys86–Cys97 and Cys110–Cys128. Ser90 is subject to Phosphoserine. 4 positions are modified to phosphoserine: Ser138, Ser139, Ser166, and Ser175.

It belongs to the SPP2 family. Post-translationally, multiply phosphorylated at serine residues in Ser-X-Glu/Ser(P) sequences, a recognition motif for phosphorylation by secretory pathway protein kinase. In terms of processing, phosphorylation sites are present in the extracellular medium. In liver and bone but not in heart, lung, kidney, or spleen.

The protein resides in the secreted. Could coordinate an aspect of bone turnover. The sequence is that of Secreted phosphoprotein 24 (SPP2) from Bos taurus (Bovine).